The primary structure comprises 480 residues: NADH-quinone oxidoreductase subunit N (480 aa).

13 helical membrane passes run asparagine 5–tyrosine 25, isoleucine 40–tyrosine 60, isoleucine 69–phenylalanine 89, valine 110–methionine 130, tyrosine 162–glycine 182, leucine 204–leucine 224, valine 237–leucine 257, leucine 266–phenylalanine 286, phenylalanine 296–threonine 316, isoleucine 324–valine 344, alanine 368–phenylalanine 388, isoleucine 404–valine 424, and methionine 450–isoleucine 470.

The protein belongs to the complex I subunit 2 family. In terms of assembly, NDH-1 is composed of 14 different subunits. Subunits NuoA, H, J, K, L, M, N constitute the membrane sector of the complex.

It is found in the cell inner membrane. The catalysed reaction is a quinone + NADH + 5 H(+)(in) = a quinol + NAD(+) + 4 H(+)(out). In terms of biological role, NDH-1 shuttles electrons from NADH, via FMN and iron-sulfur (Fe-S) centers, to quinones in the respiratory chain. The immediate electron acceptor for the enzyme in this species is believed to be a menaquinone. Couples the redox reaction to proton translocation (for every two electrons transferred, four hydrogen ions are translocated across the cytoplasmic membrane), and thus conserves the redox energy in a proton gradient. The sequence is that of NADH-quinone oxidoreductase subunit N from Azobacteroides pseudotrichonymphae genomovar. CFP2.